A 152-amino-acid chain; its full sequence is Sec-independent protein translocase protein TatB (152 aa).

Residues 1–21 (MLDVGFGELFCFGIIALLVLG) form a helical membrane-spanning segment.

It belongs to the TatB family. The Tat system comprises two distinct complexes: a TatABC complex, containing multiple copies of TatA, TatB and TatC subunits, and a separate TatA complex, containing only TatA subunits. Substrates initially bind to the TatABC complex, which probably triggers association of the separate TatA complex to form the active translocon.

The protein localises to the cell inner membrane. Part of the twin-arginine translocation (Tat) system that transports large folded proteins containing a characteristic twin-arginine motif in their signal peptide across membranes. Together with TatC, TatB is part of a receptor directly interacting with Tat signal peptides. TatB may form an oligomeric binding site that transiently accommodates folded Tat precursor proteins before their translocation. The polypeptide is Sec-independent protein translocase protein TatB (Acinetobacter baylyi (strain ATCC 33305 / BD413 / ADP1)).